The chain runs to 248 residues: Tyrosine recombinase XerD-like (248 aa).

The 72-residue stretch at 1 to 72 (MKSYIEPFIA…TANQFLYYLY (72 aa)) folds into the Core-binding (CB) domain. The 164-residue stretch at 85–248 (DTMKVMRTEK…PVTLEKYYKS (164 aa)) folds into the Tyr recombinase domain. Residues Lys149 and Arg213 contribute to the active site. Catalysis depends on Tyr245, which acts as the O-(3'-phospho-DNA)-tyrosine intermediate.

This sequence belongs to the 'phage' integrase family. XerD-like subfamily.

The protein localises to the cytoplasm. Putative tyrosine recombinase. Not involved in the cutting and rejoining of the recombining DNA molecules on dif(SL) site. The protein is Tyrosine recombinase XerD-like of Streptococcus pyogenes serotype M6 (strain ATCC BAA-946 / MGAS10394).